The chain runs to 361 residues: Phosphoserine aminotransferase (361 aa).

R43 serves as a coordination point for L-glutamate. Residues 77 to 78 (AS), W103, T153, D173, and Q196 contribute to the pyridoxal 5'-phosphate site. Residue K197 is modified to N6-(pyridoxal phosphate)lysine. Residue 238–239 (NT) coordinates pyridoxal 5'-phosphate.

Belongs to the class-V pyridoxal-phosphate-dependent aminotransferase family. SerC subfamily. In terms of assembly, homodimer. Pyridoxal 5'-phosphate serves as cofactor.

The protein localises to the cytoplasm. It carries out the reaction O-phospho-L-serine + 2-oxoglutarate = 3-phosphooxypyruvate + L-glutamate. It catalyses the reaction 4-(phosphooxy)-L-threonine + 2-oxoglutarate = (R)-3-hydroxy-2-oxo-4-phosphooxybutanoate + L-glutamate. The protein operates within amino-acid biosynthesis; L-serine biosynthesis; L-serine from 3-phospho-D-glycerate: step 2/3. Functionally, catalyzes the reversible conversion of 3-phosphohydroxypyruvate to phosphoserine and of 3-hydroxy-2-oxo-4-phosphonooxybutanoate to phosphohydroxythreonine. This is Phosphoserine aminotransferase from Bacillus anthracis (strain A0248).